A 486-amino-acid chain; its full sequence is ATP synthase subunit beta (486 aa).

164 to 171 (GGAGVGKT) lines the ATP pocket.

This sequence belongs to the ATPase alpha/beta chains family. F-type ATPases have 2 components, CF(1) - the catalytic core - and CF(0) - the membrane proton channel. CF(1) has five subunits: alpha(3), beta(3), gamma(1), delta(1), epsilon(1). CF(0) has four main subunits: a(1), b(1), b'(1) and c(9-12).

Its subcellular location is the cellular thylakoid membrane. The catalysed reaction is ATP + H2O + 4 H(+)(in) = ADP + phosphate + 5 H(+)(out). Functionally, produces ATP from ADP in the presence of a proton gradient across the membrane. The catalytic sites are hosted primarily by the beta subunits. The polypeptide is ATP synthase subunit beta (Prochlorococcus marinus (strain AS9601)).